We begin with the raw amino-acid sequence, 205 residues long: Holliday junction branch migration complex subunit RuvA (205 aa).

The interval 1–64 (MIGKLKGILE…EEAIRLFGFV (64 aa)) is domain I. Residues 65–143 (AKAEQEWFCL…PFNDNALHFT (79 aa)) form a domain II region. A flexible linker region spans residues 144 to 149 (PQPHLE). The segment at 150–205 (VTHQPTNDALSALVKLGFERDQAARALALAMNALEGETVSSALLIRHSLKLLSPST) is domain III.

The protein belongs to the RuvA family. As to quaternary structure, homotetramer. Forms an RuvA(8)-RuvB(12)-Holliday junction (HJ) complex. HJ DNA is sandwiched between 2 RuvA tetramers; dsDNA enters through RuvA and exits via RuvB. An RuvB hexamer assembles on each DNA strand where it exits the tetramer. Each RuvB hexamer is contacted by two RuvA subunits (via domain III) on 2 adjacent RuvB subunits; this complex drives branch migration. In the full resolvosome a probable DNA-RuvA(4)-RuvB(12)-RuvC(2) complex forms which resolves the HJ.

It localises to the cytoplasm. Its function is as follows. The RuvA-RuvB-RuvC complex processes Holliday junction (HJ) DNA during genetic recombination and DNA repair, while the RuvA-RuvB complex plays an important role in the rescue of blocked DNA replication forks via replication fork reversal (RFR). RuvA specifically binds to HJ cruciform DNA, conferring on it an open structure. The RuvB hexamer acts as an ATP-dependent pump, pulling dsDNA into and through the RuvAB complex. HJ branch migration allows RuvC to scan DNA until it finds its consensus sequence, where it cleaves and resolves the cruciform DNA. The protein is Holliday junction branch migration complex subunit RuvA of Bartonella quintana (strain Toulouse) (Rochalimaea quintana).